Reading from the N-terminus, the 457-residue chain is Glutamate--tRNA ligase 1 (457 aa).

The short motif at 9-19 (PSPTGYIHIGN) is the 'HIGH' region element. Positions 250–254 (GLSKR) match the 'KMSKS' region motif. Lys-253 provides a ligand contact to ATP.

The protein belongs to the class-I aminoacyl-tRNA synthetase family. Glutamate--tRNA ligase type 1 subfamily. Monomer.

It localises to the cytoplasm. It catalyses the reaction tRNA(Glu) + L-glutamate + ATP = L-glutamyl-tRNA(Glu) + AMP + diphosphate. Functionally, catalyzes the attachment of glutamate to tRNA(Glu) in a two-step reaction: glutamate is first activated by ATP to form Glu-AMP and then transferred to the acceptor end of tRNA(Glu). This Brucella abortus (strain S19) protein is Glutamate--tRNA ligase 1.